A 352-amino-acid chain; its full sequence is Inorganic triphosphatase (352 aa).

In terms of domain architecture, CYTH spans 6-203 (LQEIELKLAI…KRGYLLGSKQ (198 aa)).

The enzyme catalyses triphosphate + H2O = phosphate + diphosphate. In terms of biological role, involved in the hydrolysis of the beta-gamma-phosphoanhydride linkage of triphosphate-containing substrates (inorganic or nucleoside-linked). Catalyzes the hydrolysis of inorganic triphosphate (PPPi), which could be cytotoxic because of its high affinity for calcium ion, thereby interfering with calcium signaling. This Haemophilus influenzae (strain ATCC 51907 / DSM 11121 / KW20 / Rd) protein is Inorganic triphosphatase.